The chain runs to 465 residues: Gamma-aminobutyric acid receptor subunit rho-2 (465 aa).

Residues 1-20 (MPYLMRLALVLFCLMALVES) form the signal peptide. The Extracellular segment spans residues 21–260 (RKPRRKRWTG…LYINFTLRRH (240 aa)). Arg-105 is a 4-aminobutanoate binding site. N-linked (GlcNAc...) asparagine glycosylation is present at Asn-120. Ser-169 is a binding site for 4-aminobutanoate. A disulfide bond links Cys-178 and Cys-192. Position 197 (Glu-197) interacts with 4-aminobutanoate. Asn-254 is a glycosylation site (N-linked (GlcNAc...) asparagine). Residues 261-281 (IFFFLLQTYFPATLMVMLSWV) traverse the membrane as a helical segment. Topologically, residues 282–293 (SFWIDHRAVPAR) are cytoplasmic. The chain crosses the membrane as a helical span at residues 294–314 (VSLGIMTVLTMSTIITGVNAS). Residues 315 to 325 (MPRVSYIRAVD) are Extracellular-facing. The helical transmembrane segment at 326–346 (IYLWVSFVFVFLSVLEYAAVN) threads the bilayer. Residues 347–443 (YLTTLQEQKE…IFQNTHAIDK (97 aa)) are Cytoplasmic-facing. A helical membrane pass occupies residues 444-464 (YSRLIFPAFYIVFNLIYWSVF). Residue Ser-465 is a topological domain, extracellular.

Belongs to the ligand-gated ion channel (TC 1.A.9) family. Gamma-aminobutyric acid receptor (TC 1.A.9.5) subfamily. GABRR2 sub-subfamily. As to quaternary structure, three rho subunits (rho-1/GBRR1, rho-2/GBRR2 and rho-3/GBRR3) coassemble either to form functional homopentamers or heteropentamers. Rho-2 is unable to form a functional homopentamer. Interacts with SQSTM1. As to expression, expressed in the cerebellum.

The protein localises to the postsynaptic cell membrane. The protein resides in the cell membrane. The catalysed reaction is chloride(in) = chloride(out). In terms of biological role, rho subunit of the pentameric ligand-gated chloride channels responsible for mediating the effects of gamma-aminobutyric acid (GABA), the major inhibitory neurotransmitter in the brain. Rho-containing GABA-gated chloride channels are a subclass of GABA(A) receptors (GABAARs) entirely composed of rho subunits, where GABA molecules bind at the rho intersubunit interfaces. When activated by GABA, rho-GABAARs selectively allow the flow of chloride anions across the cell membrane down their electrochemical gradient. Rho-2 GABAARs may contribute to the regulation of glial development in the cerebellum by controlling extrasynaptic transmission. Rho-2 GABAARs are also involved in neuronal tonic (extrasynaptic) and phasic (synaptic) transmission in the Purkinje neurons of the cerebellum. Rho-2 GABAARs expressed in retina may play a role in retinal neurotransmission. The protein is Gamma-aminobutyric acid receptor subunit rho-2 of Mus musculus (Mouse).